Here is a 37-residue protein sequence, read N- to C-terminus: Non-specific lipid-transfer protein (37 aa).

The protein belongs to the plant LTP family.

Its function is as follows. Plant non-specific lipid-transfer proteins transfer phospholipids as well as galactolipids across membranes. May play a role in wax or cutin deposition in the cell walls of expanding epidermal cells and certain secretory tissues. The sequence is that of Non-specific lipid-transfer protein from Artemisia vulgaris (Mugwort).